The chain runs to 135 residues: S-protein homolog 20 (135 aa).

The signal sequence occupies residues 1–26 (MNGSSAFHIILSVTFMVFLFGGLCEA). N88 carries an N-linked (GlcNAc...) asparagine glycan.

The protein belongs to the plant self-incompatibility (S1) protein family.

It is found in the secreted. This Arabidopsis thaliana (Mouse-ear cress) protein is S-protein homolog 20.